The sequence spans 103 residues: uncharacterized protein (103 aa).

Composition is skewed to polar residues over residues 1-10 (MSNSCSTSSY) and 18-28 (TRSGSNVNRNY). Residues 1–28 (MSNSCSTSSYPIRRKTPTRSGSNVNRNY) form a disordered region.

This is an uncharacterized protein from Acanthamoeba polyphaga mimivirus (APMV).